Reading from the N-terminus, the 387-residue chain is Protein phosphatase 2C 50 (387 aa).

Residues 60–377 (VWGCASTRGR…DNITVIVVDL (318 aa)) enclose the PPM-type phosphatase domain. Positions 118 and 119 each coordinate Mn(2+). Positions 264–268 (VSGIL) match the Modulates binding affinity to PYR/PYL/RCAR abscisic acid intracellular receptors motif. Residues Asp-306 and Asp-368 each contribute to the Mn(2+) site.

This sequence belongs to the PP2C family. Interacts with PYL3, PYL5, PYL9 and PYL10. Binding to PYL3, PYL5, PYL9 and PYL10 is dependent on the presence of abscisic acid (ABA). Interacts with SAPK10. Requires Mg(2+) as cofactor. Mn(2+) serves as cofactor.

The enzyme catalyses O-phospho-L-seryl-[protein] + H2O = L-seryl-[protein] + phosphate. It catalyses the reaction O-phospho-L-threonyl-[protein] + H2O = L-threonyl-[protein] + phosphate. Protein phosphatase involved in abscisic acid (ABA) signaling. Together with PYL3 and SAPK10, may form an ABA signaling module involved in stress response. This Oryza sativa subsp. japonica (Rice) protein is Protein phosphatase 2C 50.